A 306-amino-acid polypeptide reads, in one-letter code: Ribosomal RNA small subunit methyltransferase H (306 aa).

S-adenosyl-L-methionine is bound by residues 33–35, Asp51, Phe82, Asp96, and Gln103; that span reads GGY.

This sequence belongs to the methyltransferase superfamily. RsmH family.

It is found in the cytoplasm. The enzyme catalyses cytidine(1402) in 16S rRNA + S-adenosyl-L-methionine = N(4)-methylcytidine(1402) in 16S rRNA + S-adenosyl-L-homocysteine + H(+). In terms of biological role, specifically methylates the N4 position of cytidine in position 1402 (C1402) of 16S rRNA. This Rickettsia akari (strain Hartford) protein is Ribosomal RNA small subunit methyltransferase H.